A 479-amino-acid chain; its full sequence is MHVQPTKYHGLVLDLMPNIRLMQGFGHFLFRYVSGPVLIRKLYSWWNLIMILLQYFAIMGNLVMNTGDVNELTANTITTLFFTHSVTKFIYVAVNSEHFYRTLGIWNQPNSHSLFAESDARYHSIALAKMRKLLVMVMVTTVLSVVAWITITFFGDSVKNVFDKETNETYTVEIPRLPIKALYPWDAMSGVPYFFSFVYQAYFLLFSMCQANLADVMFCSWLLFTCEQLQHLKGIMRPLMELSASLDTYRPNSAALFRAASAGSKAELILNEEKDPDTKDFDLNGIYNSKADWGAQFRAPSTLQTFNDNNGMNGNPNGLTKKQELMVRSAIKYWVERHKHVVRLVSAIGETYGAALLLHMLTSTIKLTLLAYQATKIDALNVYGLTVIGYLVYALAQVFLFCIFGNRLIEESSSVMEAAYSCHWYDGSEEAKTFVQIVCQQCQKAMTISGAKFFTVSLDLFASVLGAVVTYFMVLVQLK.

The Cytoplasmic segment spans residues 1-43 (MHVQPTKYHGLVLDLMPNIRLMQGFGHFLFRYVSGPVLIRKLY). The helical transmembrane segment at 44-64 (SWWNLIMILLQYFAIMGNLVM) threads the bilayer. Over 65-73 (NTGDVNELT) the chain is Extracellular. A helical membrane pass occupies residues 74–94 (ANTITTLFFTHSVTKFIYVAV). Topologically, residues 95–133 (NSEHFYRTLGIWNQPNSHSLFAESDARYHSIALAKMRKL) are cytoplasmic. A helical membrane pass occupies residues 134–154 (LVMVMVTTVLSVVAWITITFF). Topologically, residues 155–187 (GDSVKNVFDKETNETYTVEIPRLPIKALYPWDA) are extracellular. A glycan (N-linked (GlcNAc...) asparagine) is linked at Asn-167. A helical membrane pass occupies residues 188 to 208 (MSGVPYFFSFVYQAYFLLFSM). At 209-344 (CQANLADVMF…VERHKHVVRL (136 aa)) the chain is on the cytoplasmic side. A helical membrane pass occupies residues 345 to 365 (VSAIGETYGAALLLHMLTSTI). Topologically, residues 366–383 (KLTLLAYQATKIDALNVY) are extracellular. A helical membrane pass occupies residues 384–404 (GLTVIGYLVYALAQVFLFCIF). Over 405–455 (GNRLIEESSSVMEAAYSCHWYDGSEEAKTFVQIVCQQCQKAMTISGAKFFT) the chain is Cytoplasmic. The helical transmembrane segment at 456–476 (VSLDLFASVLGAVVTYFMVLV) threads the bilayer. Over 477 to 479 (QLK) the chain is Extracellular.

Belongs to the insect chemoreceptor superfamily. Heteromeric odorant receptor channel (TC 1.A.69) family. Orco subfamily. In terms of assembly, heterodimer with conventional odorant receptors (ORs). As to expression, expressed in female antenna, maxillary palp and proboscis. Not detected in male tissues.

The protein localises to the cell membrane. In terms of biological role, odorant coreceptor which complexes with conventional odorant receptors (ORs) to form odorant-sensing units, providing sensitive and prolonged odorant signaling and calcium permeability. Orco is a universal and integral part of the functional odorant receptor, involved in the dendritic localization of other olfactory receptors. Required for detecting a host for blood feeding. Plays a key role in preferred attraction of females for humans over non-human hosts for blood feeding. The polypeptide is Odorant receptor coreceptor (Aedes albopictus (Asian tiger mosquito)).